Consider the following 379-residue polypeptide: Chaperone protein DnaJ (379 aa).

The 65-residue stretch at 5-69 folds into the J domain; the sequence is EYYERLGVDK…QKRAAYDQYG (65 aa). The segment at 141 to 223 adopts a CR-type zinc-finger fold; the sequence is GVEKQVKYNR…CHGSGHEKVA (83 aa). Positions 154, 157, 171, 174, 197, 200, and 214 each coordinate Zn(2+). 4 CXXCXGXG motif repeats span residues 154-161, 171-178, 197-204, and 211-218; these read CHTCGGSG, CHKCGGRG, CDVCHGTG, and STTCHGSG.

Belongs to the DnaJ family. In terms of assembly, homodimer. Zn(2+) serves as cofactor.

It localises to the cytoplasm. Functionally, participates actively in the response to hyperosmotic and heat shock by preventing the aggregation of stress-denatured proteins and by disaggregating proteins, also in an autonomous, DnaK-independent fashion. Unfolded proteins bind initially to DnaJ; upon interaction with the DnaJ-bound protein, DnaK hydrolyzes its bound ATP, resulting in the formation of a stable complex. GrpE releases ADP from DnaK; ATP binding to DnaK triggers the release of the substrate protein, thus completing the reaction cycle. Several rounds of ATP-dependent interactions between DnaJ, DnaK and GrpE are required for fully efficient folding. Also involved, together with DnaK and GrpE, in the DNA replication of plasmids through activation of initiation proteins. This chain is Chaperone protein DnaJ, found in Lactococcus lactis subsp. cremoris (Streptococcus cremoris).